A 345-amino-acid polypeptide reads, in one-letter code: S-adenosylmethionine:tRNA ribosyltransferase-isomerase (345 aa).

It belongs to the QueA family. As to quaternary structure, monomer.

It localises to the cytoplasm. The enzyme catalyses 7-aminomethyl-7-carbaguanosine(34) in tRNA + S-adenosyl-L-methionine = epoxyqueuosine(34) in tRNA + adenine + L-methionine + 2 H(+). The protein operates within tRNA modification; tRNA-queuosine biosynthesis. Transfers and isomerizes the ribose moiety from AdoMet to the 7-aminomethyl group of 7-deazaguanine (preQ1-tRNA) to give epoxyqueuosine (oQ-tRNA). This is S-adenosylmethionine:tRNA ribosyltransferase-isomerase from Helicobacter pylori (strain J99 / ATCC 700824) (Campylobacter pylori J99).